The chain runs to 304 residues: Probable 5-dehydro-4-deoxyglucarate dehydratase (304 aa).

The protein belongs to the DapA family.

The enzyme catalyses 5-dehydro-4-deoxy-D-glucarate + H(+) = 2,5-dioxopentanoate + CO2 + H2O. It functions in the pathway carbohydrate acid metabolism; D-glucarate degradation; 2,5-dioxopentanoate from D-glucarate: step 2/2. The sequence is that of Probable 5-dehydro-4-deoxyglucarate dehydratase from Pseudarthrobacter chlorophenolicus (strain ATCC 700700 / DSM 12829 / CIP 107037 / JCM 12360 / KCTC 9906 / NCIMB 13794 / A6) (Arthrobacter chlorophenolicus).